A 150-amino-acid chain; its full sequence is Phosphoribosyl-AMP cyclohydrolase (150 aa).

Aspartate 93 provides a ligand contact to Mg(2+). A Zn(2+)-binding site is contributed by cysteine 94. Mg(2+) is bound by residues aspartate 95 and aspartate 97. Positions 112 and 119 each coordinate Zn(2+).

Belongs to the PRA-CH family. As to quaternary structure, homodimer. Mg(2+) is required as a cofactor. It depends on Zn(2+) as a cofactor.

Its subcellular location is the cytoplasm. The enzyme catalyses 1-(5-phospho-beta-D-ribosyl)-5'-AMP + H2O = 1-(5-phospho-beta-D-ribosyl)-5-[(5-phospho-beta-D-ribosylamino)methylideneamino]imidazole-4-carboxamide. The protein operates within amino-acid biosynthesis; L-histidine biosynthesis; L-histidine from 5-phospho-alpha-D-ribose 1-diphosphate: step 3/9. In terms of biological role, catalyzes the hydrolysis of the adenine ring of phosphoribosyl-AMP. This chain is Phosphoribosyl-AMP cyclohydrolase, found in Rhizobium etli (strain ATCC 51251 / DSM 11541 / JCM 21823 / NBRC 15573 / CFN 42).